A 239-amino-acid polypeptide reads, in one-letter code: Norbelladine 4'-O-methyltransferase 4 (239 aa).

S-adenosyl-L-methionine contacts are provided by residues valine 55, glutamate 77, 79 to 80 (GV), serine 85, aspartate 103, and alanine 132. Aspartate 155 is an a divalent metal cation binding site. Aspartate 157 is an S-adenosyl-L-methionine binding site. The a divalent metal cation site is built by aspartate 181 and asparagine 182.

It belongs to the class I-like SAM-binding methyltransferase superfamily. Cation-dependent O-methyltransferase family. Mg(2+) is required as a cofactor.

The catalysed reaction is norbelladine + S-adenosyl-L-methionine = 4'-O-methylnorbelladine + S-adenosyl-L-homocysteine + H(+). The protein operates within alkaloid biosynthesis. Its function is as follows. 4'-O-methyltransferase converting norbelladine to 4'-O-methylnorbelladine. 4'-O-methylnorbelladine is a precursor to all Amaryllidaceae alkaloids such as galanthamine, lycorine and haemanthamine, and including haemanthamine- and crinamine-type alkaloids, promising anticancer agents. The polypeptide is Norbelladine 4'-O-methyltransferase 4 (Narcissus aff. pseudonarcissus MK-2014 (Daffodil)).